The sequence spans 436 residues: 3-ketoacyl-CoA thiolase (436 aa).

Cysteine 99 acts as the Acyl-thioester intermediate in catalysis. Active-site proton acceptor residues include histidine 392 and cysteine 422.

This sequence belongs to the thiolase-like superfamily. Thiolase family. As to quaternary structure, heterotetramer of two alpha chains (FadJ) and two beta chains (FadI).

It is found in the cytoplasm. The catalysed reaction is an acyl-CoA + acetyl-CoA = a 3-oxoacyl-CoA + CoA. Its pathway is lipid metabolism; fatty acid beta-oxidation. Catalyzes the final step of fatty acid oxidation in which acetyl-CoA is released and the CoA ester of a fatty acid two carbons shorter is formed. This Shewanella sp. (strain ANA-3) protein is 3-ketoacyl-CoA thiolase.